The primary structure comprises 218 residues: MAGDLWLVGDCTNHGGLSDAIIVSPDYRLLPEATGADIFDDVEAFWNWLHTSLPSLAQSYSWQAQPDLTRILCVGQSGGGSMAVHSALLHPEYSIKVIVSLYAPLYHNVPNLTVPRPRRILGTMPPPPRKAEGLIRSYIKQSKGSVRTGGNPFDMWELLLCLLQQGRLISLMNIKPDSRLDTPFLLRQVGKLPPLWLIHGEDDSVVGPSTICVHRVIF.

Residues 7–9 (LVG) carry the Involved in the stabilization of the negatively charged intermediate by the formation of the oxyanion hole motif. Serine 77 is a catalytic residue.

Belongs to the 'GDXG' lipolytic enzyme family.

The catalysed reaction is a carboxylic ester + H2O = an alcohol + a carboxylate + H(+). It functions in the pathway secondary metabolite biosynthesis. In terms of biological role, probable carboxylesterase; part of the gene cluster that mediates the biosynthesis of squalestatin S1 (SQS1, also known as zaragozic acid A), a heavily oxidized fungal polyketide that offers potent cholesterol lowering activity by targeting squalene synthase (SS). SQS1 is composed of a 2,8-dioxobicyclic[3.2.1]octane-3,4,5-tricarboxyclic acid core that is connected to two lipophilic polyketide arms. These initial steps feature the priming of an unusual benzoic acid starter unit onto the highly reducing polyketide synthase clz14, followed by oxaloacetate extension and product release to generate a tricarboxylic acid containing product. The phenylalanine ammonia lyase (PAL) clz10 and the acyl-CoA ligase clz12 are involved in transforming phenylalanine into benzoyl-CoA. The citrate synthase-like protein clz17 is involved in connecting the C-alpha-carbons of the hexaketide chain and oxaloacetate to afford the tricarboxylic acid unit. The potential hydrolytic enzymes, clz11 and clz13, are in close proximity to pks2 and may participate in product release. On the other side, the tetraketide arm is synthesized by a the squalestatin tetraketide synthase clz2 and enzymatically esterified to the core in the last biosynthetic step, by the acetyltransferase clz6. The biosynthesis of the tetraketide must involve 3 rounds of chain extension. After the first and second rounds methyl-transfer occurs, and in all rounds of extension the ketoreductase and dehydratase are active. The enoyl reductase and C-MeT of clz2 are not active in the final round of extension. The acetyltransferase clz6 appears to have a broad substrate selectivity for its acyl CoA substrate, allowing the in vitro synthesis of novel squalestatins. The biosynthesis of SQS1 requires several oxidative steps likely performed by oxidoreductases clz3, clz15 and clz16. Finally, in support of the identification of the cluster as being responsible for SQS1 production, the cluster contains a gene encoding a putative squalene synthase (SS) clz20, suggesting a likely mechanism for self-resistance. This chain is Probable carboxylesterase clz11, found in Cochliobolus lunatus (Filamentous fungus).